Reading from the N-terminus, the 483-residue chain is ATP-dependent RNA helicase dbp-5 (483 aa).

Positions 1 to 47 are disordered; sequence MADLASRITKPDEAPAAAPEAAPVSAPASEEPKAPENETSIEESQSN. The span at 14–29 shows a compositional bias: low complexity; sequence APAAAPEAAPVSAPAS. The Q motif signature appears at 74–102; sequence SSFDELGLPEAVNRGLLAINFKKPSKVQE. One can recognise a Helicase ATP-binding domain in the interval 107–276; the sequence is LMLSDPPRNM…ERFAPNANQM (170 aa). Residue 120 to 127 participates in ATP binding; that stretch reads SQSGTGKT. A DEAD box motif is present at residues 223 to 226; that stretch reads DEAD. The Helicase C-terminal domain occupies 304–455; it reads ILCKLYGLMT…LIQLNPNDLD (152 aa).

Belongs to the DEAD box helicase family. DDX19/DBP5 subfamily. As to quaternary structure, associates with the nuclear pore complex.

It is found in the cytoplasm. Its subcellular location is the nucleus. It localises to the nuclear pore complex. The protein localises to the nucleus membrane. It catalyses the reaction ATP + H2O = ADP + phosphate + H(+). ATP-dependent RNA helicase associated with the nuclear pore complex and essential for mRNA export from the nucleus. May participate in a terminal step of mRNA export through the removal of proteins that accompany mRNA through the nucleopore complex. May also be involved in early transcription. This Neurospora crassa (strain ATCC 24698 / 74-OR23-1A / CBS 708.71 / DSM 1257 / FGSC 987) protein is ATP-dependent RNA helicase dbp-5 (dbp-5).